The primary structure comprises 437 residues: GTPase Obg (437 aa).

Residues 2 to 160 (SMFLDTAKIS…RQLELELKIL (159 aa)) enclose the Obg domain. Residues 161–338 (ADVGLVGFPS…LLEATAELLA (178 aa)) form the OBG-type G domain. Residues 167 to 174 (GFPSVGKS), 192 to 196 (FTTIV), 214 to 217 (DLPG), 284 to 287 (NKMD), and 319 to 321 (SSL) each bind GTP. 2 residues coordinate Mg(2+): Ser-174 and Thr-194. One can recognise an OCT domain in the interval 359–437 (GFAETEKDFE…IGKFEFEFVD (79 aa)).

It belongs to the TRAFAC class OBG-HflX-like GTPase superfamily. OBG GTPase family. As to quaternary structure, monomer. It depends on Mg(2+) as a cofactor.

Its subcellular location is the cytoplasm. In terms of biological role, an essential GTPase which binds GTP, GDP and possibly (p)ppGpp with moderate affinity, with high nucleotide exchange rates and a fairly low GTP hydrolysis rate. Plays a role in control of the cell cycle, stress response, ribosome biogenesis and in those bacteria that undergo differentiation, in morphogenesis control. The sequence is that of GTPase Obg from Streptococcus pyogenes serotype M1.